We begin with the raw amino-acid sequence, 345 residues long: Protein RecA (345 aa).

66-73 is a binding site for ATP; sequence GPESSGKT.

This sequence belongs to the RecA family.

It is found in the cytoplasm. Functionally, can catalyze the hydrolysis of ATP in the presence of single-stranded DNA, the ATP-dependent uptake of single-stranded DNA by duplex DNA, and the ATP-dependent hybridization of homologous single-stranded DNAs. It interacts with LexA causing its activation and leading to its autocatalytic cleavage. This is Protein RecA from Frankia casuarinae (strain DSM 45818 / CECT 9043 / HFP020203 / CcI3).